The primary structure comprises 67 residues: Protein AaeX (67 aa).

2 helical membrane passes run Leu-3 to Leu-23 and Phe-43 to Ser-63.

This sequence belongs to the AaeX family.

The protein localises to the cell membrane. The polypeptide is Protein AaeX (Escherichia coli O1:K1 / APEC).